The sequence spans 79 residues: Protein S100-G (79 aa).

The residue at position 2 (serine 2) is an N-acetylserine. 2 EF-hand domains span residues 13 to 48 (IFEK…KGPS) and 45 to 79 (KGPS…KISQ). Ca(2+)-binding residues include glutamine 26 and glutamate 31. The residue at position 42 (serine 42) is a Phosphoserine. Positions 58, 60, 62, 64, and 69 each coordinate Ca(2+).

Belongs to the S-100 family.

The sequence is that of Protein S100-G (S100G) from Bos taurus (Bovine).